The primary structure comprises 242 residues: DNA repair protein RecO (242 aa).

It belongs to the RecO family.

Its function is as follows. Involved in DNA repair and RecF pathway recombination. The polypeptide is DNA repair protein RecO (Bacteroides fragilis (strain ATCC 25285 / DSM 2151 / CCUG 4856 / JCM 11019 / LMG 10263 / NCTC 9343 / Onslow / VPI 2553 / EN-2)).